Here is a 205-residue protein sequence, read N- to C-terminus: MRLPKGIYGITDDSYNVKNHVDAAKVFLEGGVRIIQYRRKEGSIRQMLNEAKEIRKLCNQYGAVMIVDDRVDIAVLSDADGVHVGLEDAPVDEVKRRFSGIIIGASASTVDEAKEGEKAGADYLGAGSIFPSPTKPDYRILGLEGLRRVVQSVSIPVYAIGGVTLESIPAIKATGAWGAAVISGILAAKDPLEMAKRFVKAWDEA.

Residues 36–40 (QYRRK) and aspartate 68 contribute to the 4-amino-2-methyl-5-(diphosphooxymethyl)pyrimidine site. 2 residues coordinate Mg(2+): aspartate 69 and aspartate 88. Serine 106 contributes to the 4-amino-2-methyl-5-(diphosphooxymethyl)pyrimidine binding site. Residue 132–134 (SPT) coordinates 2-[(2R,5Z)-2-carboxy-4-methylthiazol-5(2H)-ylidene]ethyl phosphate. Lysine 135 contacts 4-amino-2-methyl-5-(diphosphooxymethyl)pyrimidine. Residues glycine 162 and 182–183 (IS) contribute to the 2-[(2R,5Z)-2-carboxy-4-methylthiazol-5(2H)-ylidene]ethyl phosphate site.

It belongs to the thiamine-phosphate synthase family. The cofactor is Mg(2+).

It carries out the reaction 2-[(2R,5Z)-2-carboxy-4-methylthiazol-5(2H)-ylidene]ethyl phosphate + 4-amino-2-methyl-5-(diphosphooxymethyl)pyrimidine + 2 H(+) = thiamine phosphate + CO2 + diphosphate. The catalysed reaction is 2-(2-carboxy-4-methylthiazol-5-yl)ethyl phosphate + 4-amino-2-methyl-5-(diphosphooxymethyl)pyrimidine + 2 H(+) = thiamine phosphate + CO2 + diphosphate. The enzyme catalyses 4-methyl-5-(2-phosphooxyethyl)-thiazole + 4-amino-2-methyl-5-(diphosphooxymethyl)pyrimidine + H(+) = thiamine phosphate + diphosphate. It functions in the pathway cofactor biosynthesis; thiamine diphosphate biosynthesis; thiamine phosphate from 4-amino-2-methyl-5-diphosphomethylpyrimidine and 4-methyl-5-(2-phosphoethyl)-thiazole: step 1/1. In terms of biological role, condenses 4-methyl-5-(beta-hydroxyethyl)thiazole monophosphate (THZ-P) and 2-methyl-4-amino-5-hydroxymethyl pyrimidine pyrophosphate (HMP-PP) to form thiamine monophosphate (TMP). The polypeptide is Thiamine-phosphate synthase (Caldivirga maquilingensis (strain ATCC 700844 / DSM 13496 / JCM 10307 / IC-167)).